We begin with the raw amino-acid sequence, 427 residues long: GTPase Obg (427 aa).

The 158-residue stretch at 1–158 folds into the Obg domain; the sequence is MFVDQVKIYV…RDVTLELKVL (158 aa). Positions 159–329 constitute an OBG-type G domain; the sequence is ADVGLVGFPS…LLFEVANLLE (171 aa). GTP-binding positions include 165-172, 190-194, 212-215, 282-285, and 310-312; these read GFPSVGKS, FTTIV, DLPG, NKMD, and SAV. Mg(2+) contacts are provided by serine 172 and threonine 192. The OCT domain maps to 349-427; that stretch reads YKFESESNFE…ILEYQFEFID (79 aa).

The protein belongs to the TRAFAC class OBG-HflX-like GTPase superfamily. OBG GTPase family. As to quaternary structure, monomer. It depends on Mg(2+) as a cofactor.

It localises to the cytoplasm. Functionally, an essential GTPase which binds GTP, GDP and possibly (p)ppGpp with moderate affinity, with high nucleotide exchange rates and a fairly low GTP hydrolysis rate. Plays a role in control of the cell cycle, stress response, ribosome biogenesis and in those bacteria that undergo differentiation, in morphogenesis control. The chain is GTPase Obg from Bacillus mycoides (strain KBAB4) (Bacillus weihenstephanensis).